The sequence spans 29 residues: Cytochrome b6-f complex subunit 8 (29 aa).

The helical transmembrane segment at 3 to 23 (ILTLGWVSVLTLFTYSIAMVV) threads the bilayer.

The protein belongs to the PetN family. The 4 large subunits of the cytochrome b6-f complex are cytochrome b6, subunit IV (17 kDa polypeptide, PetD), cytochrome f and the Rieske protein, while the 4 small subunits are PetG, PetL, PetM and PetN. The complex functions as a dimer.

It localises to the cellular thylakoid membrane. Component of the cytochrome b6-f complex, which mediates electron transfer between photosystem II (PSII) and photosystem I (PSI), cyclic electron flow around PSI, and state transitions. This is Cytochrome b6-f complex subunit 8 from Acaryochloris marina (strain MBIC 11017).